We begin with the raw amino-acid sequence, 369 residues long: Probable dual-specificity RNA methyltransferase RlmN (369 aa).

Glutamate 108 acts as the Proton acceptor in catalysis. A Radical SAM core domain is found at tyrosine 114–arginine 351. A disulfide bridge links cysteine 121 with cysteine 362. [4Fe-4S] cluster-binding residues include cysteine 128, cysteine 132, and cysteine 135. S-adenosyl-L-methionine is bound by residues glycine 183–glutamate 184, serine 217, serine 240–histidine 242, and asparagine 319. Cysteine 362 acts as the S-methylcysteine intermediate in catalysis.

The protein belongs to the radical SAM superfamily. RlmN family. The cofactor is [4Fe-4S] cluster.

It is found in the cytoplasm. It catalyses the reaction adenosine(2503) in 23S rRNA + 2 reduced [2Fe-2S]-[ferredoxin] + 2 S-adenosyl-L-methionine = 2-methyladenosine(2503) in 23S rRNA + 5'-deoxyadenosine + L-methionine + 2 oxidized [2Fe-2S]-[ferredoxin] + S-adenosyl-L-homocysteine. The enzyme catalyses adenosine(37) in tRNA + 2 reduced [2Fe-2S]-[ferredoxin] + 2 S-adenosyl-L-methionine = 2-methyladenosine(37) in tRNA + 5'-deoxyadenosine + L-methionine + 2 oxidized [2Fe-2S]-[ferredoxin] + S-adenosyl-L-homocysteine. Its function is as follows. Specifically methylates position 2 of adenine 2503 in 23S rRNA and position 2 of adenine 37 in tRNAs. The polypeptide is Probable dual-specificity RNA methyltransferase RlmN (Rhodococcus opacus (strain B4)).